We begin with the raw amino-acid sequence, 719 residues long: uncharacterized protein (719 aa).

Residues 64–100 (IQNLNQRKEEVIRLIAEQDKLTDNLKRKIEQSVKLQE) adopt a coiled-coil conformation. The region spanning 649-718 (GMELQGTVRN…QKGRVSLSMV (70 aa)) is the S1 motif domain.

This is an uncharacterized protein from Bacillus subtilis (strain 168).